Here is a 107-residue protein sequence, read N- to C-terminus: Phosphoribosyl-ATP pyrophosphatase (107 aa).

It belongs to the PRA-PH family.

The protein localises to the cytoplasm. The catalysed reaction is 1-(5-phospho-beta-D-ribosyl)-ATP + H2O = 1-(5-phospho-beta-D-ribosyl)-5'-AMP + diphosphate + H(+). Its pathway is amino-acid biosynthesis; L-histidine biosynthesis; L-histidine from 5-phospho-alpha-D-ribose 1-diphosphate: step 2/9. This chain is Phosphoribosyl-ATP pyrophosphatase, found in Rhizobium johnstonii (strain DSM 114642 / LMG 32736 / 3841) (Rhizobium leguminosarum bv. viciae).